The chain runs to 20 residues: Protein PR-L6 (20 aa).

The protein belongs to the BetVI family.

This chain is Protein PR-L6, found in Lupinus luteus (European yellow lupine).